We begin with the raw amino-acid sequence, 292 residues long: Ribosomal RNA small subunit methyltransferase A (292 aa).

Positions 28, 30, 55, 76, 101, and 126 each coordinate S-adenosyl-L-methionine.

This sequence belongs to the class I-like SAM-binding methyltransferase superfamily. rRNA adenine N(6)-methyltransferase family. RsmA subfamily.

The protein localises to the cytoplasm. The enzyme catalyses adenosine(1518)/adenosine(1519) in 16S rRNA + 4 S-adenosyl-L-methionine = N(6)-dimethyladenosine(1518)/N(6)-dimethyladenosine(1519) in 16S rRNA + 4 S-adenosyl-L-homocysteine + 4 H(+). Functionally, specifically dimethylates two adjacent adenosines (A1518 and A1519) in the loop of a conserved hairpin near the 3'-end of 16S rRNA in the 30S particle. May play a critical role in biogenesis of 30S subunits. The protein is Ribosomal RNA small subunit methyltransferase A of Bacillus cereus (strain G9842).